Consider the following 771-residue polypeptide: Leucine-rich repeat and fibronectin type III domain-containing protein 1 (771 aa).

Residues 1-31 form the signal peptide; sequence MAPGPFSSALLSPPPAALPFLLLLWAGASRG. One can recognise an LRRNT domain in the interval 32–65; it reads QPCPGRCICQNVAPTLTMLCAKTGLLFVPPAIDR. At 32 to 536 the chain is on the extracellular side; sequence QPCPGRCICQ…LRAHFLGGTM (505 aa). LRR repeat units lie at residues 66-87, 90-111, 114-135, 138-159, 163-184, 187-208, and 211-232; these read RVVE…DFAN, SLVH…AFAD, ALRA…QLRG, NLRH…AFDA, TVED…AVGQ, NLNT…TFVQ, and KLVR…GLFL. Asparagine 87 carries N-linked (GlcNAc...) asparagine glycosylation. The LRRCT domain occupies 252–298; the sequence is NPLHCNCELLWLRRLTREDDLETCATPEHLTDRYFWSIPEEEFLCEP. The region spanning 299–386 is the Ig-like domain; that stretch reads PLITRQAGGR…GEATAPVEVC (88 aa). Cysteine 321 and cysteine 370 are oxidised to a cystine. A glycan (N-linked (GlcNAc...) asparagine) is linked at asparagine 343. The interval 397–422 is disordered; sequence PAAPPPLTEPGSSDIATPGRPGANDS. In terms of domain architecture, Fibronectin type-III spans 424–520; that stretch reads AERRLVAAEL…GCVQFTTAGD (97 aa). The helical transmembrane segment at 537–557 threads the bilayer; sequence IIAIGGVIVASVLVFIVLLMI. Topologically, residues 558 to 771 are cytoplasmic; the sequence is RYKVYGDGDS…STEWMLESTV (214 aa). Serine 613 and serine 718 each carry phosphoserine. The interval 654–743 is disordered; sequence PSEETSGEES…HLDGAGGGAA (90 aa). A compositionally biased stretch (basic residues) spans 719-732; the sequence is YPRRARRTKRHRST. A PDZ-binding motif is present at residues 768-771; sequence ESTV.

It belongs to the LRFN family. Can form heteromeric complexes with LRFN2, LRFN3, LRFN4 and LRFN5. Forms homomeric complexes, but not across cell junctions. Interacts with DLG1, DLG2, DLG3 and DLG4. Interacts with 2 AMPA receptor subunits GRIA1 and GRIA2 and NMDA receptor subunit GRIN1. Post-translationally, glycosylated.

The protein resides in the membrane. The protein localises to the synapse. Its subcellular location is the postsynaptic density membrane. Functionally, promotes neurite outgrowth in hippocampal neurons. Involved in the regulation and maintenance of excitatory synapses. Induces the clustering of excitatory postsynaptic proteins, including DLG4, DLGAP1, GRIA1 and GRIN1. In Homo sapiens (Human), this protein is Leucine-rich repeat and fibronectin type III domain-containing protein 1 (LRFN1).